The primary structure comprises 298 residues: Glutamyl-Q tRNA(Asp) synthetase (298 aa).

L-glutamate contacts are provided by residues Arg-9–Ser-13 and Glu-45. The short motif at Pro-12 to Ser-22 is the 'HIGH' region element. The Zn(2+) site is built by Cys-101, Cys-103, Tyr-115, and Cys-119. Residues Tyr-172 and Arg-190 each contribute to the L-glutamate site. A 'KMSKS' region motif is present at residues Lys-228–Gln-232. Lys-231 is an ATP binding site.

This sequence belongs to the class-I aminoacyl-tRNA synthetase family. GluQ subfamily. Requires Zn(2+) as cofactor.

In terms of biological role, catalyzes the tRNA-independent activation of glutamate in presence of ATP and the subsequent transfer of glutamate onto a tRNA(Asp). Glutamate is transferred on the 2-amino-5-(4,5-dihydroxy-2-cyclopenten-1-yl) moiety of the queuosine in the wobble position of the QUC anticodon. The sequence is that of Glutamyl-Q tRNA(Asp) synthetase from Salmonella typhi.